A 274-amino-acid chain; its full sequence is MASKSQFPYEDRARDHPNPLARRLFQIATEKQSNVVVSADVTTTKELLDLADRLGPYMVVLKTHIDILADFSAETITGLQSLSQKHNFLIFEDRKFVDIGNTVQKQYHGGALHISEWAHIVNATVLPGPGIIDALAQVASAPDFPHASDRGLLILATMTSKGSLATGQYTELSVELARKYKGFVLGFVASRSLEGVETAGKADDEDFVLFTTGVNLASKGDALGQQYQTPESAIGGGADFIISGRGIYAAPDPVDAARRYQKAGWDAYLKRVGR.

Substrate-binding positions include aspartate 40, 62–64 (KTH), 93–102 (DRKFVDIGNT), tyrosine 227, and arginine 245. Lysine 95 serves as the catalytic Proton donor.

The protein belongs to the OMP decarboxylase family.

The enzyme catalyses orotidine 5'-phosphate + H(+) = UMP + CO2. It participates in pyrimidine metabolism; UMP biosynthesis via de novo pathway; UMP from orotate: step 2/2. The protein is Orotidine 5'-phosphate decarboxylase (URA3) of Coccidioides posadasii (strain RMSCC 757 / Silveira) (Valley fever fungus).